Reading from the N-terminus, the 171-residue chain is Large ribosomal subunit protein uL24 (171 aa).

The segment at 1–124 is large ribosomal subunit protein uL24; sequence MNIKTGDTVV…AKPAKTKAEK (124 aa). Residues 108 to 171 form a disordered region; the sequence is GQTLDKAAKP…SVQKKGASGK (64 aa). A unknown region spans residues 125–171; it reads VEKAATSSTDKPAKVTKAAKEAKPVKAVKSQKVEKNTSVQKKGASGK.

It belongs to the universal ribosomal protein uL24 family. In terms of assembly, part of the 50S ribosomal subunit.

Its function is as follows. One of two assembly initiator proteins, it binds directly to the 5'-end of the 23S rRNA, where it nucleates assembly of the 50S subunit. In terms of biological role, one of the proteins that surrounds the polypeptide exit tunnel on the outside of the subunit. The protein is Large ribosomal subunit protein uL24 of Acholeplasma laidlawii (strain PG-8A).